Here is a 754-residue protein sequence, read N- to C-terminus: Endothelin-converting enzyme 1 (754 aa).

At 1–52 (MMSTYKRATLDEEDLVDSLSEGEVYPNGLQVNFRNFRSSQRCWATRTQVEKR) the chain is on the cytoplasmic side. Residue threonine 9 is modified to Phosphothreonine. The chain crosses the membrane as a helical; Signal-anchor for type II membrane protein span at residues 53 to 73 (LIVLVALLAAGLVACLTALGI). Residues 74-754 (QYRTRTPPVC…MNPRHKCEVW (681 aa)) are Extracellular-facing. The Peptidase M13 domain maps to 82 to 754 (VCLSEACVSV…MNPRHKCEVW (673 aa)). 5 cysteine pairs are disulfide-bonded: cysteine 83–cysteine 88, cysteine 106–cysteine 739, cysteine 114–cysteine 699, cysteine 169–cysteine 419, and cysteine 628–cysteine 751. Asparagine 150, asparagine 171, asparagine 194, asparagine 254, asparagine 300, asparagine 346, asparagine 367, and asparagine 523 each carry an N-linked (GlcNAc...) asparagine glycan. Position 591 (histidine 591) interacts with Zn(2+). Residue glutamate 592 is part of the active site. Histidine 595 provides a ligand contact to Zn(2+). Asparagine 616 and asparagine 635 each carry an N-linked (GlcNAc...) asparagine glycan. Residue glutamate 651 participates in Zn(2+) binding. Residue aspartate 655 is the Proton donor of the active site.

The protein belongs to the peptidase M13 family. In terms of assembly, homodimer; disulfide-linked. Interacts with PPP1R16B. Interacts with TSPAN8; this interaction recruits the endothelin converting enzyme ECE1 to tetraspanin-enriched microdomains and positively modulates its enzymatic activity. Zn(2+) is required as a cofactor.

Its subcellular location is the cell membrane. The catalysed reaction is Hydrolysis of the 21-Trp-|-Val-22 bond in big endothelin to form endothelin 1.. Its activity is regulated as follows. Inhibited by phosphoramidon. Converts big endothelin-1 to endothelin-1. The polypeptide is Endothelin-converting enzyme 1 (ECE1) (Cavia porcellus (Guinea pig)).